Consider the following 71-residue polypeptide: Protein translocase subunit SecE (71 aa).

Residues 43–63 traverse the membrane as a helical segment; the sequence is VAGVGILAVGAIGFIIYVLLT.

Belongs to the SecE/SEC61-gamma family. In terms of assembly, component of the Sec protein translocase complex. Heterotrimer consisting of SecY (alpha), SecG (beta) and SecE (gamma) subunits. The heterotrimers can form oligomers, although 1 heterotrimer is thought to be able to translocate proteins. Interacts with the ribosome. May interact with SecDF, and other proteins may be involved.

It is found in the cell membrane. Essential subunit of the Sec protein translocation channel SecYEG. Clamps together the 2 halves of SecY. May contact the channel plug during translocation. The chain is Protein translocase subunit SecE from Methanosarcina barkeri (strain Fusaro / DSM 804).